A 392-amino-acid chain; its full sequence is L-rhamnonate dehydratase (392 aa).

His-22 and Arg-48 together coordinate substrate. Asp-214, Glu-240, and Glu-268 together coordinate Mg(2+). His-318 functions as the Proton acceptor in the catalytic mechanism. Glu-338 contacts substrate.

The protein belongs to the mandelate racemase/muconate lactonizing enzyme family. RhamD subfamily. As to quaternary structure, homooctamer; tetramer of dimers. Mg(2+) is required as a cofactor.

The enzyme catalyses L-rhamnonate = 2-dehydro-3-deoxy-L-rhamnonate + H2O. Its function is as follows. Catalyzes the dehydration of L-rhamnonate to 2-keto-3-deoxy-L-rhamnonate (KDR). This is L-rhamnonate dehydratase from Paraburkholderia phymatum (strain DSM 17167 / CIP 108236 / LMG 21445 / STM815) (Burkholderia phymatum).